The sequence spans 254 residues: Pectate lyase E (254 aa).

An N-terminal signal peptide occupies residues 1–17; the sequence is MYQPLLLLPLLLTSAFA. Residues 227–254 are disordered; that stretch reads TNNNSKEPKKKSSGPSSYCKYSEPLSKC. Asn229 is a glycosylation site (N-linked (GlcNAc...) asparagine). Low complexity predominate over residues 239–254; it reads SGPSSYCKYSEPLSKC.

It belongs to the polysaccharide lyase 3 family. Ca(2+) serves as cofactor.

It is found in the secreted. The enzyme catalyses Eliminative cleavage of (1-&gt;4)-alpha-D-galacturonan to give oligosaccharides with 4-deoxy-alpha-D-galact-4-enuronosyl groups at their non-reducing ends.. Pectinolytic enzyme consist of four classes of enzymes: pectin lyase, polygalacturonase, pectin methylesterase and rhamnogalacturonase. Among pectinolytic enzymes, pectin lyase is the most important in depolymerization of pectin, since it cleaves internal glycosidic bonds of highly methylated pectins. Favors pectate, the anion, over pectin, the methyl ester. This Emericella nidulans (strain FGSC A4 / ATCC 38163 / CBS 112.46 / NRRL 194 / M139) (Aspergillus nidulans) protein is Pectate lyase E (plyE).